We begin with the raw amino-acid sequence, 452 residues long: tRNA modification GTPase MnmE (452 aa).

The (6S)-5-formyl-5,6,7,8-tetrahydrofolate site is built by arginine 21, glutamate 78, and lysine 118. One can recognise a TrmE-type G domain in the interval 214-375; it reads GMKAVIAGRP…LREHLKTSMG (162 aa). Residue asparagine 224 participates in K(+) binding. GTP contacts are provided by residues 224–229, 243–249, and 268–271; these read NAGKSS, TNIAGTT, and DTAG. A Mg(2+)-binding site is contributed by serine 228. K(+) contacts are provided by threonine 243, isoleucine 245, and threonine 248. Position 249 (threonine 249) interacts with Mg(2+). Lysine 452 contacts (6S)-5-formyl-5,6,7,8-tetrahydrofolate.

The protein belongs to the TRAFAC class TrmE-Era-EngA-EngB-Septin-like GTPase superfamily. TrmE GTPase family. Homodimer. Heterotetramer of two MnmE and two MnmG subunits. K(+) is required as a cofactor.

It is found in the cytoplasm. Its function is as follows. Exhibits a very high intrinsic GTPase hydrolysis rate. Involved in the addition of a carboxymethylaminomethyl (cmnm) group at the wobble position (U34) of certain tRNAs, forming tRNA-cmnm(5)s(2)U34. This chain is tRNA modification GTPase MnmE, found in Haemophilus ducreyi (strain 35000HP / ATCC 700724).